The following is a 318-amino-acid chain: tRNA U34 carboxymethyltransferase (318 aa).

Carboxy-S-adenosyl-L-methionine contacts are provided by residues lysine 85, tryptophan 99, lysine 104, glycine 124, 175-176 (LD), methionine 190, tyrosine 194, and arginine 311.

It belongs to the class I-like SAM-binding methyltransferase superfamily. CmoB family. As to quaternary structure, homotetramer.

The enzyme catalyses carboxy-S-adenosyl-L-methionine + 5-hydroxyuridine(34) in tRNA = 5-carboxymethoxyuridine(34) in tRNA + S-adenosyl-L-homocysteine + H(+). Its function is as follows. Catalyzes carboxymethyl transfer from carboxy-S-adenosyl-L-methionine (Cx-SAM) to 5-hydroxyuridine (ho5U) to form 5-carboxymethoxyuridine (cmo5U) at position 34 in tRNAs. The sequence is that of tRNA U34 carboxymethyltransferase from Ruthia magnifica subsp. Calyptogena magnifica.